Reading from the N-terminus, the 407-residue chain is tRNA(Ile2) 2-agmatinylcytidine synthetase TiaS (407 aa).

The protein belongs to the TiaS family.

It is found in the cytoplasm. It catalyses the reaction cytidine(34) in tRNA(Ile2) + agmatine + ATP + H2O = 2-agmatinylcytidine(34) in tRNA(Ile2) + AMP + 2 phosphate + 2 H(+). Functionally, ATP-dependent agmatine transferase that catalyzes the formation of 2-agmatinylcytidine (agm2C) at the wobble position (C34) of tRNA(Ile2), converting the codon specificity from AUG to AUA. The polypeptide is tRNA(Ile2) 2-agmatinylcytidine synthetase TiaS (Caldivirga maquilingensis (strain ATCC 700844 / DSM 13496 / JCM 10307 / IC-167)).